A 254-amino-acid chain; its full sequence is Persulfide dioxygenase ETHE1, mitochondrial (254 aa).

The N-terminal 7 residues, 1–7, are a transit peptide targeting the mitochondrion; that stretch reads MAGSVLK. 2 positions are modified to phosphoserine: serine 14 and serine 19. Position 32 is an N6-acetyllysine; alternate (lysine 32). The residue at position 32 (lysine 32) is an N6-succinyllysine; alternate. Lysine 66 bears the N6-acetyllysine mark. 3 residues coordinate Fe cation: histidine 79, histidine 135, and aspartate 154.

Belongs to the metallo-beta-lactamase superfamily. Glyoxalase II family. As to quaternary structure, homodimer. Monomer. Interacts with TST. May interact with RELA. Requires Fe(2+) as cofactor.

It localises to the cytoplasm. It is found in the nucleus. The protein localises to the mitochondrion matrix. The enzyme catalyses S-sulfanylglutathione + O2 + H2O = sulfite + glutathione + 2 H(+). Its activity is regulated as follows. Glutathione increases enzyme activity. Functionally, sulfur dioxygenase that plays an essential role in hydrogen sulfide catabolism in the mitochondrial matrix. Hydrogen sulfide (H(2)S) is first oxidized by SQRDL, giving rise to cysteine persulfide residues. ETHE1 consumes molecular oxygen to catalyze the oxidation of the persulfide, once it has been transferred to a thiophilic acceptor, such as glutathione (R-SSH). Plays an important role in metabolic homeostasis in mitochondria by metabolizing hydrogen sulfide and preventing the accumulation of supraphysiological H(2)S levels that have toxic effects, due to the inhibition of cytochrome c oxidase. First described as a protein that can shuttle between the nucleus and the cytoplasm and suppress p53-induced apoptosis by sequestering the transcription factor RELA/NFKB3 in the cytoplasm and preventing its accumulation in the nucleus. This is Persulfide dioxygenase ETHE1, mitochondrial (ETHE1) from Bos taurus (Bovine).